An 84-amino-acid polypeptide reads, in one-letter code: M-myrmeciitoxin-Mb2a (84 aa).

An N-terminal signal peptide occupies residues 1 to 21; sequence MKLSCLLLTLAIIFVLTIVHA. A propeptide spanning residues 22-48 is cleaved from the precursor; that stretch reads PNVKAKALADPESDAVGFADAVGEADP.

This sequence belongs to the formicidae venom precursor-01 superfamily. Ant pilosulin family. As to expression, expressed by the venom gland.

The protein resides in the secreted. In terms of biological role, shows activity against E.coli and S.aureus (MIC&lt;6.25 uM), moderate activity against P.aeruginosa (MIC&lt;25 uM), weak activity against B.subtilis (MIC&lt;50 uM), and has no effect against L.garvieae, C.albicans, and S.cerevisiae. Has no hemolytic nor cytolytic activity. Causes an IgE-independent histamine release. This chain is M-myrmeciitoxin-Mb2a, found in Myrmecia banksi (Jack jumper ant).